The sequence spans 494 residues: Ketol-acid reductoisomerase (NADP(+)) (494 aa).

The KARI N-terminal Rossmann domain maps to 14–208; the sequence is LDQIGRCRFM…GGDRAGVLES (195 aa). NADP(+) is bound by residues 45–48, R68, R76, S78, and 108–110; these read CGAQ and DKQ. H132 is a catalytic residue. An NADP(+)-binding site is contributed by G158. 2 KARI C-terminal knotted domains span residues 209 to 344 and 345 to 487; these read SFVA…NAPE and YNGK…MTDM. 4 residues coordinate Mg(2+): D217, E221, E389, and E393. S414 serves as a coordination point for substrate.

This sequence belongs to the ketol-acid reductoisomerase family. It depends on Mg(2+) as a cofactor.

The catalysed reaction is (2R)-2,3-dihydroxy-3-methylbutanoate + NADP(+) = (2S)-2-acetolactate + NADPH + H(+). It carries out the reaction (2R,3R)-2,3-dihydroxy-3-methylpentanoate + NADP(+) = (S)-2-ethyl-2-hydroxy-3-oxobutanoate + NADPH + H(+). The protein operates within amino-acid biosynthesis; L-isoleucine biosynthesis; L-isoleucine from 2-oxobutanoate: step 2/4. It participates in amino-acid biosynthesis; L-valine biosynthesis; L-valine from pyruvate: step 2/4. Functionally, involved in the biosynthesis of branched-chain amino acids (BCAA). Catalyzes an alkyl-migration followed by a ketol-acid reduction of (S)-2-acetolactate (S2AL) to yield (R)-2,3-dihydroxy-isovalerate. In the isomerase reaction, S2AL is rearranged via a Mg-dependent methyl migration to produce 3-hydroxy-3-methyl-2-ketobutyrate (HMKB). In the reductase reaction, this 2-ketoacid undergoes a metal-dependent reduction by NADPH to yield (R)-2,3-dihydroxy-isovalerate. The chain is Ketol-acid reductoisomerase (NADP(+)) from Pseudoalteromonas atlantica (strain T6c / ATCC BAA-1087).